Here is a 660-residue protein sequence, read N- to C-terminus: Peroxisomal acyl-coenzyme A oxidase 1 (660 aa).

Ser-26 carries the phosphoserine modification. Lys-65 carries the N6-acetyllysine modification. Lys-89 and Lys-90 each carry N6-succinyllysine. Thr-139 and Gly-178 together coordinate FAD. At Lys-216 the chain carries N6-acetyllysine. Lys-241 carries the post-translational modification N6-succinyllysine. Residues Lys-255, Lys-267, and Lys-272 each carry the N6-acetyllysine modification. Position 349 is an N6-succinyllysine (Lys-349). The Proton acceptor role is filled by Glu-421. An N6-acetyllysine; alternate mark is found at Lys-437 and Lys-446. N6-succinyllysine; alternate is present on residues Lys-437 and Lys-446. Residue Lys-500 is modified to N6-acetyllysine. Lys-512 is modified (N6-acetyllysine; alternate). Lys-512 carries the post-translational modification N6-succinyllysine; alternate. The residue at position 542 (Lys-542) is an N6-succinyllysine. N6-acetyllysine; alternate is present on Lys-637. Lys-637 is subject to N6-succinyllysine; alternate. Lys-643 is subject to N6-succinyllysine. Ser-649 is subject to Phosphoserine. An N6-acetyllysine modification is found at Lys-651. N6-succinyllysine is present on Lys-654. Positions 658–660 (SKL) match the Microbody targeting signal motif.

Belongs to the acyl-CoA oxidase family. Homodimer. Interacts with LONP2. It depends on FAD as a cofactor.

It is found in the peroxisome. It catalyses the reaction a 2,3-saturated acyl-CoA + O2 = a (2E)-enoyl-CoA + H2O2. The catalysed reaction is hexadecanoyl-CoA + O2 = (2E)-hexadecenoyl-CoA + H2O2. It carries out the reaction dodecanoyl-CoA + O2 = (2E)-dodecenoyl-CoA + H2O2. The enzyme catalyses octanoyl-CoA + O2 = (2E)-octenoyl-CoA + H2O2. It catalyses the reaction decanoyl-CoA + O2 = (2E)-decenoyl-CoA + H2O2. The catalysed reaction is tetradecanoyl-CoA + O2 = (2E)-tetradecenoyl-CoA + H2O2. It carries out the reaction hexadecanedioyl-CoA + O2 = (2E)-hexadecenedioyl-CoA + H2O2. The enzyme catalyses tetracosanoyl-CoA + O2 = (2E)-tetracosenoyl-CoA + H2O2. It catalyses the reaction glutaryl-CoA + O2 = (2E)-glutaconyl-CoA + H2O2. The catalysed reaction is hexanoyl-CoA + O2 = (2E)-hexenoyl-CoA + H2O2. It carries out the reaction octadecanoyl-CoA + O2 = (2E)-octadecenoyl-CoA + H2O2. The enzyme catalyses (5Z,8Z,11Z,14Z,17Z)-eicosapentaenoyl-CoA + O2 = (2E,5Z,8Z,11Z,14Z,17Z)-icosahexaenoyl-CoA + H2O2. It catalyses the reaction (6Z,9Z,12Z,15Z,18Z,21Z)-tetracosahexaenoyl-CoA + O2 = (2E,6Z,9Z,12Z,15Z,18Z,21Z)-tetracosaheptaenoyl-CoA + H2O2. It participates in lipid metabolism; peroxisomal fatty acid beta-oxidation. Functionally, involved in the initial and rate-limiting step of peroxisomal beta-oxidation of straight-chain saturated and unsaturated very-long-chain fatty acids. Catalyzes the desaturation of fatty acyl-CoAs such as palmitoyl-CoA (hexadecanoyl-CoA) to 2-trans-enoyl-CoAs ((2E)-enoyl-CoAs) such as (2E)-hexadecenoyl-CoA, and donates electrons directly to molecular oxygen (O(2)), thereby producing hydrogen peroxide (H(2)O(2)). The chain is Peroxisomal acyl-coenzyme A oxidase 1 from Bos taurus (Bovine).